Reading from the N-terminus, the 411-residue chain is Mannan endo-1,4-beta-mannosidase 1 (411 aa).

The signal sequence occupies residues 1–17; that stretch reads MLNILPFFLFFLPFLIG. Asn-33 carries N-linked (GlcNAc...) asparagine glycosylation. The substrate site is built by Trp-87 and Asn-197. The Proton donor role is filled by Glu-198. N-linked (GlcNAc...) asparagine glycosylation is present at Asn-202. Position 277 (Tyr-277) interacts with substrate. The active-site Nucleophile is Glu-319. Residue Trp-361 coordinates substrate. N-linked (GlcNAc...) asparagine glycans are attached at residues Asn-366 and Asn-384.

It belongs to the glycosyl hydrolase 5 (cellulase A) family. In terms of tissue distribution, expressed in roots, stems and flowers.

Its subcellular location is the secreted. It catalyses the reaction Random hydrolysis of (1-&gt;4)-beta-D-mannosidic linkages in mannans, galactomannans and glucomannans.. The sequence is that of Mannan endo-1,4-beta-mannosidase 1 (MAN1) from Arabidopsis thaliana (Mouse-ear cress).